The chain runs to 344 residues: RNA 3'-terminal phosphate cyclase (344 aa).

ATP is bound by residues glutamine 103 and 283-287; that span reads HLADQ. Catalysis depends on histidine 308, which acts as the Tele-AMP-histidine intermediate.

This sequence belongs to the RNA 3'-terminal cyclase family. Type 1 subfamily.

The protein localises to the cytoplasm. The enzyme catalyses a 3'-end 3'-phospho-ribonucleotide-RNA + ATP = a 3'-end 2',3'-cyclophospho-ribonucleotide-RNA + AMP + diphosphate. Functionally, catalyzes the conversion of 3'-phosphate to a 2',3'-cyclic phosphodiester at the end of RNA. The mechanism of action of the enzyme occurs in 3 steps: (A) adenylation of the enzyme by ATP; (B) transfer of adenylate to an RNA-N3'P to produce RNA-N3'PP5'A; (C) and attack of the adjacent 2'-hydroxyl on the 3'-phosphorus in the diester linkage to produce the cyclic end product. The biological role of this enzyme is unknown but it is likely to function in some aspects of cellular RNA processing. In Salmonella paratyphi C (strain RKS4594), this protein is RNA 3'-terminal phosphate cyclase.